The sequence spans 254 residues: Short-chain dehydrogenase/reductase SDRA (254 aa).

Position 15 to 39 (15 to 39 (IVTASTQGIGFGITERFGLEGASVV)) interacts with NADP(+). Residue S146 participates in substrate binding. Y159 serves as the catalytic Proton acceptor. The Microbody targeting signal motif lies at 252–254 (SRL).

It belongs to the short-chain dehydrogenases/reductases (SDR) family.

The protein localises to the peroxisome. Its function is as follows. Involved with IBR3 and IBR10 in the peroxisomal beta-oxidation of indole-3-butyric acid (IBA) to form indole-3-acetic acid (IAA), a biologically active auxin. May be responsible for catalyzing the dehydrogenation step in the conversion of IBA. May be involved in the peroxisomal activation of 2,4-dichlorophenoxybutyric acid (2,4-DB), a precursor of active auxins that inhibit root growth. This Arabidopsis thaliana (Mouse-ear cress) protein is Short-chain dehydrogenase/reductase SDRA.